Consider the following 154-residue polypeptide: MPVDPEKLAKLQKASVAKKVGGSRVKAKKNVKTEQDDTKLIEALGKLKAQKIEGIEEANFFKEDGKVLHFNRVGVQGAAQHNTFALTGYPQEKDVTQLIPQILPQLGAENLEILRKLAEQIQAGKNPELNAGGAEGAEEDIPDLIEGQKFDDVE.

Residues 34–99 (EQDDTKLIEA…PQEKDVTQLI (66 aa)) enclose the NAC-A/B domain. Positions 125 to 154 (KNPELNAGGAEGAEEDIPDLIEGQKFDDVE) are disordered.

This sequence belongs to the NAC-beta family. In terms of assembly, part of the nascent polypeptide-associated complex (NAC), consisting of EGD2 and EGD1. NAC associates with ribosomes via EGD1.

The protein resides in the cytoplasm. It localises to the nucleus. Its function is as follows. Component of the nascent polypeptide-associated complex (NAC), a dynamic component of the ribosomal exit tunnel, protecting the emerging polypeptides from interaction with other cytoplasmic proteins to ensure appropriate nascent protein targeting. The NAC complex also promotes mitochondrial protein import by enhancing productive ribosome interactions with the outer mitochondrial membrane and blocks the inappropriate interaction of ribosomes translating non-secretory nascent polypeptides with translocation sites in the membrane of the endoplasmic reticulum. EGD1 may act as a transcription factor that exert a negative effect on the expression of several genes that are transcribed by RNA polymerase II. The polypeptide is Nascent polypeptide-associated complex subunit beta (EGD1) (Debaryomyces hansenii (strain ATCC 36239 / CBS 767 / BCRC 21394 / JCM 1990 / NBRC 0083 / IGC 2968) (Yeast)).